A 148-amino-acid polypeptide reads, in one-letter code: Snaclec jerdonuxin subunit beta (148 aa).

The first 23 residues, 1-23 (MVRFIFVSFGLLVVFLSLSGIGA), serve as a signal peptide directing secretion. 3 disulfides stabilise this stretch: cysteine 27-cysteine 38, cysteine 55-cysteine 144, and cysteine 121-cysteine 136. One can recognise a C-type lectin domain in the interval 34–145 (YDEHCYQVFQ…CSSKRYIVCK (112 aa)).

This sequence belongs to the snaclec family. As to quaternary structure, tetramer of 4 heterodimers of alpha and beta subunits; disulfide-linked. As to expression, expressed by the venom gland.

It localises to the secreted. Snaclec that strongly induces platelet aggregation, in a dose-dependent manner. This Protobothrops jerdonii (Jerdon's pitviper) protein is Snaclec jerdonuxin subunit beta.